The chain runs to 362 residues: Homeobox protein extradenticle (362 aa).

A PBC domain is found at 34–225 (PRKQDIGEIL…VMILRSRFLD (192 aa)). The PBC-A stretch occupies residues 41–120 (EILQQIMNIT…EGVAGPEKGG (80 aa)). Residues 123–225 (DFLSQSDLTG…VMILRSRFLD (103 aa)) form a PBC-B region. The homeobox; TALE-type DNA-binding region spans 226-288 (ARRKRRNFSK…NKRIRYKKNI (63 aa)). A disordered region spans residues 305-362 (GASPYSMGGPPSGAATPMMSPAPAQDSMGYSLGSGGYDQQQPYDGSMGYDQLHQDLSP).

It belongs to the TALE/PBX homeobox family.

It localises to the nucleus. Functionally, transcription factor which acts with the selector homeodomain proteins altering the regulation of downstream target genes such as wingless (wg), teashirt (tsh) and decapentaplegic (dpp), thus affecting segmental identity. In Anopheles gambiae (African malaria mosquito), this protein is Homeobox protein extradenticle.